Here is a 360-residue protein sequence, read N- to C-terminus: Histidinol-phosphate aminotransferase (360 aa).

The residue at position 221 (lysine 221) is an N6-(pyridoxal phosphate)lysine.

This sequence belongs to the class-II pyridoxal-phosphate-dependent aminotransferase family. Histidinol-phosphate aminotransferase subfamily. Homodimer. Pyridoxal 5'-phosphate serves as cofactor.

The catalysed reaction is L-histidinol phosphate + 2-oxoglutarate = 3-(imidazol-4-yl)-2-oxopropyl phosphate + L-glutamate. It functions in the pathway amino-acid biosynthesis; L-histidine biosynthesis; L-histidine from 5-phospho-alpha-D-ribose 1-diphosphate: step 7/9. The protein is Histidinol-phosphate aminotransferase of Desulfitobacterium hafniense (strain DSM 10664 / DCB-2).